A 227-amino-acid polypeptide reads, in one-letter code: Urease accessory protein UreF 2 (227 aa).

The protein belongs to the UreF family. UreD, UreF and UreG form a complex that acts as a GTP-hydrolysis-dependent molecular chaperone, activating the urease apoprotein by helping to assemble the nickel containing metallocenter of UreC. The UreE protein probably delivers the nickel.

The protein localises to the cytoplasm. Functionally, required for maturation of urease via the functional incorporation of the urease nickel metallocenter. The chain is Urease accessory protein UreF 2 from Brucella anthropi (strain ATCC 49188 / DSM 6882 / CCUG 24695 / JCM 21032 / LMG 3331 / NBRC 15819 / NCTC 12168 / Alc 37) (Ochrobactrum anthropi).